The primary structure comprises 211 residues: Transcriptional regulator GfcR (211 aa).

Belongs to the purine/pyrimidine phosphoribosyltransferase family. GfcR subfamily.

The polypeptide is Transcriptional regulator GfcR (Methanocaldococcus jannaschii (strain ATCC 43067 / DSM 2661 / JAL-1 / JCM 10045 / NBRC 100440) (Methanococcus jannaschii)).